We begin with the raw amino-acid sequence, 1014 residues long: Klotho (1014 aa).

An N-terminal signal peptide occupies residues 1–34 (MPARAPPRRLPRLLLLRLLSLHLLLLTLRARCLS). Topologically, residues 35-983 (AEPGQGAQTW…GCGFFQTRKS (949 aa)) are extracellular. 2 glycosyl hydrolase-1 regions span residues 59-508 (LHDT…NNGF) and 517-955 (LEGT…NNGF). Residues asparagine 161, asparagine 285, asparagine 346, asparagine 609, asparagine 614, and asparagine 696 are each glycosylated (N-linked (GlcNAc...) asparagine). A helical transmembrane segment spans residues 984-1004 (LLAFISFLVFAFVTSLALIYY). Over 1005–1014 (YSKKGRRRYK) the chain is Cytoplasmic.

It belongs to the glycosyl hydrolase 1 family. Klotho subfamily. As to quaternary structure, homodimer. Interacts with FGF23 and FGFR1. In terms of processing, N-glycosylated. As to expression, present in cortical renal tubules and the parathyroid (at protein level). Strongly expressed in kidney. Expressed at low levels in brain, lung, intestine and ovaries.

The protein resides in the cell membrane. It is found in the apical cell membrane. The protein localises to the secreted. It catalyses the reaction a beta-D-glucuronoside + H2O = D-glucuronate + an alcohol. In terms of biological role, may have weak glycosidase activity towards glucuronylated steroids. However, it lacks essential active site Glu residues at positions 241 and 874, suggesting it may be inactive as a glycosidase in vivo. May be involved in the regulation of calcium and phosphorus homeostasis by inhibiting the synthesis of active vitamin D. Essential factor for the specific interaction between FGF23 and FGFR1. Its function is as follows. The Klotho peptide generated by cleavage of the membrane-bound isoform may be an anti-aging circulating hormone which would extend life span by inhibiting insulin/IGF1 signaling. In Rattus norvegicus (Rat), this protein is Klotho (Kl).